A 251-amino-acid chain; its full sequence is Lactose phosphotransferase system repressor (251 aa).

The HTH deoR-type domain maps to K3 to S58. A DNA-binding region (H-T-H motif) is located at residues I20–D39.

Its function is as follows. Repressor of the lactose catabolism operon. Galactose-6-phosphate is the inducer. In Streptococcus mutans serotype c (strain ATCC 700610 / UA159), this protein is Lactose phosphotransferase system repressor (lacR).